The chain runs to 250 residues: Ribosomal RNA small subunit methyltransferase J (250 aa).

Residues 101–102 (RD), 117–118 (ER), 153–154 (SS), and D171 contribute to the S-adenosyl-L-methionine site.

The protein belongs to the methyltransferase superfamily. RsmJ family.

It is found in the cytoplasm. The enzyme catalyses guanosine(1516) in 16S rRNA + S-adenosyl-L-methionine = N(2)-methylguanosine(1516) in 16S rRNA + S-adenosyl-L-homocysteine + H(+). Its function is as follows. Specifically methylates the guanosine in position 1516 of 16S rRNA. In Klebsiella pneumoniae (strain 342), this protein is Ribosomal RNA small subunit methyltransferase J.